The sequence spans 662 residues: Probable quinol oxidase subunit 1 (662 aa).

Transmembrane regions (helical) follow at residues 14–34 (WMITMAQIGAPFLVIGLIAVI) and 58–78 (VMYLICAVLMFVRGGIDALLI). Fe(II)-heme a is bound at residue H102. 8 helical membrane-spanning segments follow: residues 103–123 (GVIMIIFMAMPFIFGLWNIVV), 140–160 (VSFWLFFAGMILFNLSFIIGG), 187–207 (IAIQISGLGTLATGINFFVTI), 228–248 (FITTLIVILAFPPLTVALALM), 273–293 (FFWVWGHPEVYIVILPAFGIY), 311–331 (MVWATAGIAFLSFLVWVHHFF), 336–356 (GALINSFFSISTMLIGIPTGV), and 376–396 (MLFSLAFIPNFLLGGVTGVML). The Cu cation site is built by H279, Y283, H328, and H329. Residues 279–283 (HPEVY) constitute a cross-link (1'-histidyl-3'-tyrosine (His-Tyr)). H414 contributes to the heme a3 binding site. 5 helical membrane passes run 415-435 (FHYTLVTGVVFACLAGLIFWY), 451-471 (CFWFFMIGFNVCFLPQFILGL), 493-513 (ISTIGALLMAIGFLFLVVSIV), 587-604 (PVGFWIGIFMTIGGFFLI), and 608-627 (VIPALICLFGIFGTMIYRSF). H416 is a binding site for Fe(II)-heme a.

It belongs to the heme-copper respiratory oxidase family. Cu cation is required as a cofactor. Requires ferriheme a as cofactor. It depends on Heme A3. as a cofactor.

The protein localises to the cell membrane. The catalysed reaction is 2 a quinol + O2 = 2 a quinone + 2 H2O. The protein operates within energy metabolism; oxidative phosphorylation. In terms of biological role, catalyzes quinol oxidation with the concomitant reduction of oxygen to water. The protein is Probable quinol oxidase subunit 1 (qoxB) of Staphylococcus aureus (strain COL).